A 173-amino-acid chain; its full sequence is Transmembrane protein 278 (173 aa).

Positions 1–14 are enriched in acidic residues; the sequence is MSEQERETEEDEGV. Residues 1 to 25 are disordered; the sequence is MSEQERETEEDEGVASDTAPMLPRR. 3 consecutive transmembrane segments (helical) span residues 31 to 51, 53 to 73, and 107 to 127; these read HISV…VLSG, ALVG…LVLL, and AALI…AAAA. The disordered stretch occupies residues 141–165; it reads DPARTPAPRRPPRSSGDLADGHPDE.

It belongs to the TMEM88 family.

Its subcellular location is the membrane. The protein is Transmembrane protein 278 (Tmem278) of Mus musculus (Mouse).